Consider the following 1409-residue polypeptide: Copia protein (1409 aa).

A CCHC-type zinc finger spans residues 230 to 247; it reads VKCHHCGREGHIKKDCFH. Asp-292 acts as the For protease activity in catalysis. An Integrase catalytic domain is found at 476 to 644; the sequence is HIKRPLFVVH…TPYEMWHNKK (169 aa). Disordered stretches follow at residues 760–780 and 805–851; these read SKESENKNFPNDSRKIIQTEF and NESK…NDGI. A compositionally biased stretch (basic and acidic residues) spans 827–841; it reads ESRESETAEHLKEIG.

In Drosophila melanogaster (Fruit fly), this protein is Copia protein (GIP).